Here is a 396-residue protein sequence, read N- to C-terminus: S-adenosylmethionine synthase 1 (396 aa).

Glu13 serves as a coordination point for Mg(2+). His19 contacts ATP. K(+) is bound at residue Glu47. 2 residues coordinate L-methionine: Glu60 and Gln103. ATP-binding positions include 171 to 173 (DGK), 239 to 242 (SGRF), Asp250, 256 to 257 (RK), Ala273, Lys277, and Lys281. Asp250 lines the L-methionine pocket. Residue Lys281 participates in L-methionine binding.

It belongs to the AdoMet synthase family. Homotetramer. It depends on Mn(2+) as a cofactor. Mg(2+) serves as cofactor. Requires Co(2+) as cofactor. The cofactor is K(+).

It is found in the cytoplasm. The enzyme catalyses L-methionine + ATP + H2O = S-adenosyl-L-methionine + phosphate + diphosphate. The protein operates within amino-acid biosynthesis; S-adenosyl-L-methionine biosynthesis; S-adenosyl-L-methionine from L-methionine: step 1/1. In terms of biological role, catalyzes the formation of S-adenosylmethionine from methionine and ATP. The reaction comprises two steps that are both catalyzed by the same enzyme: formation of S-adenosylmethionine (AdoMet) and triphosphate, and subsequent hydrolysis of the triphosphate. May be involved in the synthesis of betain in response to abiotic stress such as high salinity. The sequence is that of S-adenosylmethionine synthase 1 (SAMS1) from Beta vulgaris (Sugar beet).